The following is a 208-amino-acid chain: MIGLVGRKVGMTRIFNEDGVSIPVTVIEIEANRVTQVKTLENDGYTAVQVTTGFKKASRVTKPEAGHFVKAGVEAGRGLWEFRTEGEEFTLGQEINVDIFTDVKKVDVTGTSKGKGFQGGVKRWNFRTQDATHGNSLSHRVLGSIGQNQTPGRVFKGKKMAGHLGAERVTVQSLEIVRVDVERKLLLVKGSVPGATNSDVIVKPAVKA.

The residue at position 149 (Gln-149) is an N5-methylglutamine.

This sequence belongs to the universal ribosomal protein uL3 family. In terms of assembly, part of the 50S ribosomal subunit. Forms a cluster with proteins L14 and L19. In terms of processing, methylated by PrmB.

In terms of biological role, one of the primary rRNA binding proteins, it binds directly near the 3'-end of the 23S rRNA, where it nucleates assembly of the 50S subunit. The polypeptide is Large ribosomal subunit protein uL3 (Histophilus somni (strain 129Pt) (Haemophilus somnus)).